The sequence spans 509 residues: Maturase K (509 aa).

This sequence belongs to the intron maturase 2 family. MatK subfamily.

The protein localises to the plastid. It localises to the chloroplast. In terms of biological role, usually encoded in the trnK tRNA gene intron. Probably assists in splicing its own and other chloroplast group II introns. The sequence is that of Maturase K from Arpophyllum giganteum (Hyacinth orchid).